The sequence spans 91 residues: DNA-binding protein HU-beta 2 (91 aa).

Belongs to the bacterial histone-like protein family.

Its function is as follows. Histone-like DNA-binding protein which is capable of wrapping DNA to stabilize it, and thus to prevent its denaturation under extreme environmental conditions. This Neisseria meningitidis serogroup A / serotype 4A (strain DSM 15465 / Z2491) protein is DNA-binding protein HU-beta 2 (hupB2).